A 437-amino-acid chain; its full sequence is GTPase Era, mitochondrial (437 aa).

The transit peptide at 1–43 (MAASSWRGAVLLRTVSGLWQAGPDAAREWMTRLPSLLGFQQRC) directs the protein to the mitochondrion. The region spanning 112 to 330 (RVLRVVLLGA…QYLLAQARPG (219 aa)) is the Era-type G domain. The G1 stretch occupies residues 120 to 127 (GAPNAGKS). A GTP-binding site is contributed by 120-127 (GAPNAGKS). The segment at 146–150 (HTTRS) is G2. The tract at residues 167–170 (DTPG) is G3. 167–171 (DTPGL) serves as a coordination point for GTP. At Ser-173 the chain carries Phosphoserine. 236–239 (NKVD) serves as a coordination point for GTP. The interval 236-239 (NKVD) is G4. The segment at 264–296 (LKTKQALRSRPDTHCPSPAAQGPNPQPVRDPQQ) is disordered. Residues 308–310 (LSA) are G5. The region spanning 360–437 (LPEEVPYNVQ…QLRLSVKLLK (78 aa)) is the KH type-2 domain.

It belongs to the TRAFAC class TrmE-Era-EngA-EngB-Septin-like GTPase superfamily. Era GTPase family.

The protein resides in the mitochondrion matrix. The protein localises to the mitochondrion inner membrane. Its function is as follows. Probable GTPase that plays a role in the mitochondrial ribosomal small subunit assembly. Specifically binds the 12S mitochondrial rRNA (12S mt-rRNA) to a 33 nucleotide section delineating the 3' terminal stem-loop region. May act as a chaperone that protects the 12S mt-rRNA on the 28S mitoribosomal subunit during ribosomal small subunit assembly. The sequence is that of GTPase Era, mitochondrial (ERAL1) from Bos taurus (Bovine).